Consider the following 274-residue polypeptide: MTQALQALIDQAWEDRTSLSPKSAPNDIREAVANVISQLDSGALRVAEKQGKDWVVNQWIKKAVLLSFRLEDNAPMSAGGFAQFYDKVPTKFANWTGDDFAKAGFRVVPPAVARRGSYIARNAVLMPSYVNIGAYVDEGTMVDTWATVGSCAQIGKNVHLSGGVGIGGVLEPLQANPVIIEDNCFIGARSEVVEGVIIEENSVISMGVYLGQSTKIYDRETGEIHYGRVPAGSVVVAGNLPSKDGKYSLYCAVIVKKVDAQTRAKTSLNDLLRD.

The substrate site is built by Arg106 and Asp143.

The protein belongs to the transferase hexapeptide repeat family. As to quaternary structure, homotrimer.

The protein resides in the cytoplasm. The catalysed reaction is (S)-2,3,4,5-tetrahydrodipicolinate + succinyl-CoA + H2O = (S)-2-succinylamino-6-oxoheptanedioate + CoA. The protein operates within amino-acid biosynthesis; L-lysine biosynthesis via DAP pathway; LL-2,6-diaminopimelate from (S)-tetrahydrodipicolinate (succinylase route): step 1/3. The polypeptide is 2,3,4,5-tetrahydropyridine-2,6-dicarboxylate N-succinyltransferase (Cupriavidus metallidurans (strain ATCC 43123 / DSM 2839 / NBRC 102507 / CH34) (Ralstonia metallidurans)).